A 513-amino-acid polypeptide reads, in one-letter code: ATP synthase subunit alpha (513 aa).

An ATP-binding site is contributed by 169 to 176 (GDRQCGKT).

It belongs to the ATPase alpha/beta chains family. F-type ATPases have 2 components, CF(1) - the catalytic core - and CF(0) - the membrane proton channel. CF(1) has five subunits: alpha(3), beta(3), gamma(1), delta(1), epsilon(1). CF(0) has three main subunits: a(1), b(2) and c(9-12). The alpha and beta chains form an alternating ring which encloses part of the gamma chain. CF(1) is attached to CF(0) by a central stalk formed by the gamma and epsilon chains, while a peripheral stalk is formed by the delta and b chains.

The protein localises to the cell inner membrane. The enzyme catalyses ATP + H2O + 4 H(+)(in) = ADP + phosphate + 5 H(+)(out). Its function is as follows. Produces ATP from ADP in the presence of a proton gradient across the membrane. The alpha chain is a regulatory subunit. In Burkholderia mallei (strain NCTC 10229), this protein is ATP synthase subunit alpha.